The following is a 159-amino-acid chain: Ribosomal RNA large subunit methyltransferase H (159 aa).

S-adenosyl-L-methionine contacts are provided by residues Leu-76, Gly-108, and 127–132 (FGRLTL).

This sequence belongs to the RNA methyltransferase RlmH family. In terms of assembly, homodimer.

It localises to the cytoplasm. It carries out the reaction pseudouridine(1915) in 23S rRNA + S-adenosyl-L-methionine = N(3)-methylpseudouridine(1915) in 23S rRNA + S-adenosyl-L-homocysteine + H(+). Its function is as follows. Specifically methylates the pseudouridine at position 1915 (m3Psi1915) in 23S rRNA. This chain is Ribosomal RNA large subunit methyltransferase H, found in Listeria monocytogenes serotype 4b (strain CLIP80459).